The following is a 135-amino-acid chain: uncharacterized protein (135 aa).

Transmembrane regions (helical) follow at residues 7-25 (WSAAVLAAAVSFLYGEWTI), 29-51 (ILLTLVVIDYGTGLVAAGVTGNI), 64-85 (VFIFVMVAIAHMIDTVLLEVGI), and 89-108 (ALIFMAAVVFYIVNELISIF).

It belongs to the bacteriophage holin family. Cp-1 holin subfamily.

The protein localises to the cell membrane. This is an uncharacterized protein from Halalkalibacterium halodurans (strain ATCC BAA-125 / DSM 18197 / FERM 7344 / JCM 9153 / C-125) (Bacillus halodurans).